A 399-amino-acid polypeptide reads, in one-letter code: Argininosuccinate synthase (399 aa).

8 to 16 (AYSGGLDTS) lines the ATP pocket. Tyrosine 87 contributes to the L-citrulline binding site. Glycine 117 is a binding site for ATP. Residues threonine 119, asparagine 123, and aspartate 124 each coordinate L-aspartate. Residue asparagine 123 coordinates L-citrulline. L-citrulline contacts are provided by arginine 127, serine 175, glutamate 260, and tyrosine 272.

It belongs to the argininosuccinate synthase family. Type 1 subfamily. Homotetramer.

It localises to the cytoplasm. The enzyme catalyses L-citrulline + L-aspartate + ATP = 2-(N(omega)-L-arginino)succinate + AMP + diphosphate + H(+). It functions in the pathway amino-acid biosynthesis; L-arginine biosynthesis; L-arginine from L-ornithine and carbamoyl phosphate: step 2/3. The sequence is that of Argininosuccinate synthase from Rhodococcus jostii (strain RHA1).